The following is a 120-amino-acid chain: NAD(P)H-quinone oxidoreductase subunit 3, chloroplastic (120 aa).

3 consecutive transmembrane segments (helical) span residues 9-29 (IFWA…FVSG), 64-84 (MFAL…PWAM), and 88-108 (VLGI…IVGL).

Belongs to the complex I subunit 3 family. In terms of assembly, NDH is composed of at least 16 different subunits, 5 of which are encoded in the nucleus.

The protein resides in the plastid. It localises to the chloroplast thylakoid membrane. The catalysed reaction is a plastoquinone + NADH + (n+1) H(+)(in) = a plastoquinol + NAD(+) + n H(+)(out). It catalyses the reaction a plastoquinone + NADPH + (n+1) H(+)(in) = a plastoquinol + NADP(+) + n H(+)(out). NDH shuttles electrons from NAD(P)H:plastoquinone, via FMN and iron-sulfur (Fe-S) centers, to quinones in the photosynthetic chain and possibly in a chloroplast respiratory chain. The immediate electron acceptor for the enzyme in this species is believed to be plastoquinone. Couples the redox reaction to proton translocation, and thus conserves the redox energy in a proton gradient. The protein is NAD(P)H-quinone oxidoreductase subunit 3, chloroplastic of Daucus carota (Wild carrot).